A 491-amino-acid polypeptide reads, in one-letter code: UDP-N-acetylmuramate--L-alanine ligase (491 aa).

ATP is bound at residue Gly126–Thr132.

It belongs to the MurCDEF family.

It is found in the cytoplasm. It catalyses the reaction UDP-N-acetyl-alpha-D-muramate + L-alanine + ATP = UDP-N-acetyl-alpha-D-muramoyl-L-alanine + ADP + phosphate + H(+). It functions in the pathway cell wall biogenesis; peptidoglycan biosynthesis. In terms of biological role, cell wall formation. This Escherichia coli (strain SMS-3-5 / SECEC) protein is UDP-N-acetylmuramate--L-alanine ligase.